A 471-amino-acid polypeptide reads, in one-letter code: Zinc finger protein 385B (471 aa).

The segment at 1–93 (MNMANFLRGF…TGSTCHTTTL (93 aa)) is required for induction of apoptosis. The Matrin-type 1 zinc finger occupies 34 to 64 (SFCEVCNIQLNSAAQAQVHSNGKSHRKRVKQ). Disordered regions lie at residues 50–92 (QVHS…HTTT) and 175–275 (HYKG…TVVE). Residues 76–92 (ASPSSNSSTGSTCHTTT) are compositionally biased toward low complexity. Residues 94–471 (PALVRTPTLM…TPASILFAPY (378 aa)) form an interaction with p53/TP53 region. The Matrin-type 2 zinc-finger motif lies at 157–187 (ISCNVCQLRFNSDSQAEAHYKGSKHAKKVKA). Positions 206–220 (ANPSCSITPITGNNS) are enriched in polar residues. The span at 230 to 250 (KASSSSQPSSSESGSFLLKSG) shows a compositional bias: low complexity. Positions 260-269 (TSPSKSTNGA) are enriched in polar residues. Residues 282-316 (KKLLYCSLCKVAVNSLSQLEAHNTGSKHKTMVEAR) form a Matrin-type 3 zinc finger. A disordered region spans residues 318 to 340 (GAGPIKSYPRPGSRLKMQNGSKG). A Matrin-type 4 zinc finger spans residues 348 to 378 (FHCEICDVHVNSEIQLKQHISSRRHKDRVAG).

Interacts with p53/TP53; the interaction is direct. In terms of tissue distribution, detected in germinal center of lymph node (at protein level). Expressed in spleen, lymph node and tonsil.

Its subcellular location is the nucleus. In terms of biological role, may play a role in p53/TP53-mediated apoptosis. The polypeptide is Zinc finger protein 385B (ZNF385B) (Homo sapiens (Human)).